Consider the following 198-residue polypeptide: Na(+)-translocating NADH-quinone reductase subunit E (198 aa).

Transmembrane regions (helical) follow at residues 11–31 (SIFI…FLAV), 40–60 (GLGI…NLVF), 77–97 (FLGF…LEMF), 110–130 (GIFL…SFMV), 140–160 (VVYG…MAAI), and 176–196 (LGIT…FSGI).

This sequence belongs to the NqrDE/RnfAE family. As to quaternary structure, composed of six subunits; NqrA, NqrB, NqrC, NqrD, NqrE and NqrF.

It localises to the cell inner membrane. The enzyme catalyses a ubiquinone + n Na(+)(in) + NADH + H(+) = a ubiquinol + n Na(+)(out) + NAD(+). NQR complex catalyzes the reduction of ubiquinone-1 to ubiquinol by two successive reactions, coupled with the transport of Na(+) ions from the cytoplasm to the periplasm. NqrA to NqrE are probably involved in the second step, the conversion of ubisemiquinone to ubiquinol. The protein is Na(+)-translocating NADH-quinone reductase subunit E of Tolumonas auensis (strain DSM 9187 / NBRC 110442 / TA 4).